The chain runs to 426 residues: Glutamate-1-semialdehyde 2,1-aminomutase (426 aa).

Lys-265 is modified (N6-(pyridoxal phosphate)lysine).

Belongs to the class-III pyridoxal-phosphate-dependent aminotransferase family. HemL subfamily. Homodimer. Pyridoxal 5'-phosphate serves as cofactor.

It localises to the cytoplasm. The catalysed reaction is (S)-4-amino-5-oxopentanoate = 5-aminolevulinate. The protein operates within porphyrin-containing compound metabolism; protoporphyrin-IX biosynthesis; 5-aminolevulinate from L-glutamyl-tRNA(Glu): step 2/2. The polypeptide is Glutamate-1-semialdehyde 2,1-aminomutase (Pectobacterium atrosepticum (strain SCRI 1043 / ATCC BAA-672) (Erwinia carotovora subsp. atroseptica)).